The primary structure comprises 191 residues: Protein GrpE (191 aa).

The segment covering 1–11 (MTDSSNAHEAE) has biased composition (basic and acidic residues). Disordered stretches follow at residues 1–22 (MTDS…DNEI) and 172–191 (KVSK…NNNE).

Belongs to the GrpE family. In terms of assembly, homodimer.

It localises to the cytoplasm. Functionally, participates actively in the response to hyperosmotic and heat shock by preventing the aggregation of stress-denatured proteins, in association with DnaK and GrpE. It is the nucleotide exchange factor for DnaK and may function as a thermosensor. Unfolded proteins bind initially to DnaJ; upon interaction with the DnaJ-bound protein, DnaK hydrolyzes its bound ATP, resulting in the formation of a stable complex. GrpE releases ADP from DnaK; ATP binding to DnaK triggers the release of the substrate protein, thus completing the reaction cycle. Several rounds of ATP-dependent interactions between DnaJ, DnaK and GrpE are required for fully efficient folding. In Chlamydia abortus (strain DSM 27085 / S26/3) (Chlamydophila abortus), this protein is Protein GrpE.